The primary structure comprises 545 residues: Membrane protein insertase YidC (545 aa).

The chain crosses the membrane as a helical span at residues 6 to 26 (NILLIGLLFVSFLLWQQWQAD). Residues 44 to 65 (STVADAHSSDVPDADSAVPEAT) form a disordered region. The next 4 membrane-spanning stretches (helical) occupy residues 346–366 (LLMF…LITL), 424–444 (GGCL…WVLL), 461–481 (LSVQ…MFVM), and 504–524 (VIFT…WLVG).

This sequence belongs to the OXA1/ALB3/YidC family. Type 1 subfamily. In terms of assembly, interacts with the Sec translocase complex via SecD. Specifically interacts with transmembrane segments of nascent integral membrane proteins during membrane integration.

The protein resides in the cell inner membrane. In terms of biological role, required for the insertion and/or proper folding and/or complex formation of integral membrane proteins into the membrane. Involved in integration of membrane proteins that insert both dependently and independently of the Sec translocase complex, as well as at least some lipoproteins. Aids folding of multispanning membrane proteins. This is Membrane protein insertase YidC from Shewanella pealeana (strain ATCC 700345 / ANG-SQ1).